We begin with the raw amino-acid sequence, 284 residues long: uncharacterized protein (284 aa).

To E.coli YnjA.

This is an uncharacterized protein from Mycobacterium tuberculosis (strain CDC 1551 / Oshkosh).